Consider the following 393-residue polypeptide: Glutamate 5-kinase 1 (393 aa).

ATP is bound at residue Lys-17. Residues Ser-57, Asp-144, and Asn-156 each contribute to the substrate site. 176–177 (SD) is a binding site for ATP. One can recognise a PUA domain in the interval 282-359 (AGSLSIDAGA…AEIAAILGYA (78 aa)).

The protein belongs to the glutamate 5-kinase family.

The protein resides in the cytoplasm. The enzyme catalyses L-glutamate + ATP = L-glutamyl 5-phosphate + ADP. It participates in amino-acid biosynthesis; L-proline biosynthesis; L-glutamate 5-semialdehyde from L-glutamate: step 1/2. Its function is as follows. Catalyzes the transfer of a phosphate group to glutamate to form L-glutamate 5-phosphate. This is Glutamate 5-kinase 1 from Rhizobium meliloti (strain 1021) (Ensifer meliloti).